We begin with the raw amino-acid sequence, 315 residues long: Ornithine carbamoyltransferase (315 aa).

Residues 57 to 60, Gln-84, Arg-108, and 135 to 138 contribute to the carbamoyl phosphate site; these read STRT and HPCQ. L-ornithine is bound by residues Asn-166, Asp-230, and 234–235; that span reads SM. Residues 270–271 and Arg-298 contribute to the carbamoyl phosphate site; that span reads CL.

It belongs to the aspartate/ornithine carbamoyltransferase superfamily. OTCase family.

The protein localises to the cytoplasm. The enzyme catalyses carbamoyl phosphate + L-ornithine = L-citrulline + phosphate + H(+). The protein operates within amino-acid biosynthesis; L-arginine biosynthesis; L-arginine from L-ornithine and carbamoyl phosphate: step 1/3. Functionally, reversibly catalyzes the transfer of the carbamoyl group from carbamoyl phosphate (CP) to the N(epsilon) atom of ornithine (ORN) to produce L-citrulline. The chain is Ornithine carbamoyltransferase from Thermococcus kodakarensis (strain ATCC BAA-918 / JCM 12380 / KOD1) (Pyrococcus kodakaraensis (strain KOD1)).